Consider the following 347-residue polypeptide: Fc receptor-like A (347 aa).

The first 27 residues, 1–27, serve as a signal peptide directing secretion; sequence MKLSCMLIEWALYVCPAVLLATQMSLA. Ig-like C2-type domains follow at residues 77–166 and 179–257; these read PFHL…ETAS and PVLK…RQIS. 2 disulfide bridges follow: cysteine 106–cysteine 150 and cysteine 199–cysteine 247. The segment at 272 to 296 is disordered; that stretch reads KPATPETPPPAKAPGPLPLLPTPSD. The span at 276–292 shows a compositional bias: pro residues; that stretch reads PETPPPAKAPGPLPLLP.

As to quaternary structure, monomer or homodimer; disulfide-linked.

Its subcellular location is the cytoplasm. In terms of biological role, may be implicated in B-cell differentiation and lymphomagenesis. The polypeptide is Fc receptor-like A (Fcrla) (Rattus norvegicus (Rat)).